We begin with the raw amino-acid sequence, 209 residues long: RNA chaperone ProQ (209 aa).

Residues 105–148 are disordered; sequence ESQDKAKAKRAALAPKPAAKKAPKKVAVPQRAKTERPAKPAPKA.

It belongs to the ProQ family.

It localises to the cytoplasm. Its function is as follows. RNA chaperone with significant RNA binding, RNA strand exchange and RNA duplexing activities. This chain is RNA chaperone ProQ, found in Shewanella baltica (strain OS223).